Here is a 382-residue protein sequence, read N- to C-terminus: D-galactonate dehydratase (382 aa).

Asp-183 provides a ligand contact to Mg(2+). His-185 (proton donor) is an active-site residue. Residues Glu-209 and Glu-235 each contribute to the Mg(2+) site. His-285 functions as the Proton acceptor in the catalytic mechanism.

It belongs to the mandelate racemase/muconate lactonizing enzyme family. GalD subfamily. Mg(2+) is required as a cofactor.

The catalysed reaction is D-galactonate = 2-dehydro-3-deoxy-D-galactonate + H2O. Its pathway is carbohydrate acid metabolism; D-galactonate degradation; D-glyceraldehyde 3-phosphate and pyruvate from D-galactonate: step 1/3. Catalyzes the dehydration of D-galactonate to 2-keto-3-deoxy-D-galactonate. The chain is D-galactonate dehydratase from Salmonella paratyphi A (strain AKU_12601).